The chain runs to 137 residues: Large ribosomal subunit protein uL16 (137 aa).

The protein belongs to the universal ribosomal protein uL16 family. In terms of assembly, part of the 50S ribosomal subunit.

In terms of biological role, binds 23S rRNA and is also seen to make contacts with the A and possibly P site tRNAs. The sequence is that of Large ribosomal subunit protein uL16 from Francisella tularensis subsp. holarctica (strain FTNF002-00 / FTA).